Here is a 446-residue protein sequence, read N- to C-terminus: tRNA wybutosine-synthesizing protein 2 homolog (446 aa).

Residues serine 208, lysine 215, glutamate 255, and 283 to 284 (DN) contribute to the S-adenosyl-L-methionine site.

The protein belongs to the class I-like SAM-binding methyltransferase superfamily. TRM5/TYW2 family.

The enzyme catalyses 4-demethylwyosine(37) in tRNA(Phe) + S-adenosyl-L-methionine = 4-demethyl-7-[(3S)-3-amino-3-carboxypropyl]wyosine(37) in tRNA(Phe) + S-methyl-5'-thioadenosine + H(+). The protein operates within tRNA modification; wybutosine-tRNA(Phe) biosynthesis. Its function is as follows. S-adenosyl-L-methionine-dependent transferase that acts as a component of the wybutosine biosynthesis pathway. Wybutosine is a hyper modified guanosine with a tricyclic base found at the 3'-position adjacent to the anticodon of eukaryotic phenylalanine tRNA. Catalyzes the transfer of the alpha-amino-alpha-carboxypropyl (acp) group from S-adenosyl-L-methionine to the C-7 position of 4-demethylwyosine (imG-14) to produce wybutosine-86. The polypeptide is tRNA wybutosine-synthesizing protein 2 homolog (Trmt12) (Mus musculus (Mouse)).